Reading from the N-terminus, the 426-residue chain is Potassium channel subfamily K member 2 (426 aa).

The Cytoplasmic segment spans residues 1–61 (MLPSASRERP…TTINVMKWKT (61 aa)). Important for GNG4 binding and L-glutamate release in astrocytes stretches follow at residues 17 to 38 (AAPD…LSFS) and 51 to 61 (DTTINVMKWKT). The helical transmembrane segment at 62–82 (VSTIFLVVVLYLIIGATVFKA) threads the bilayer. Residues Asn110 and Asn134 are each glycosylated (N-linked (GlcNAc...) asparagine). The pore-forming intramembrane region spans 144-170 (LGSSFFFAGTVITTIGFGNISPRTEGG). K(+) contacts are provided by Thr157, Ile158, Gly159, and Phe160. Residues 157–162 (TIGFGN) are selectivity filter 1. The chain crosses the membrane as a helical span at residues 172 to 192 (IFCIIYALLGIPLFGFLLAGV). At 193–223 (GDQLGTIFGKGIAKVEDTFIKWNVSQTKIRI) the chain is on the cytoplasmic side. Residues 224–244 (ISTIIFILFGCVLFVALPAII) form a helical membrane-spanning segment. The segment at residues 253-283 (ALDAIYFVVITLTTIGFGDYVAGGSDIEYLD) is an intramembrane region (pore-forming). Thr266, Ile267, Gly268, and Phe269 together coordinate K(+). The segment at 266–271 (TIGFGD) is selectivity filter 2. The helical transmembrane segment at 288-308 (VVWFWILVGLAYFAAVLSMIG) threads the bilayer. Topologically, residues 309–426 (DWLRVISKKT…EEIAVIENIK (118 aa)) are cytoplasmic. The tract at residues 313 to 326 (VISKKTKEEVGEFR) is interaction with AKAP5. An essential for chloroform and halothane sensitivity region spans residues 337 to 385 (TAEFKETRRRLSVEIYDKFQRATSIKRKLSAELAGNHNQELTPCRRTLS). Ser348 bears the Phosphoserine; by PKA mark.

The protein belongs to the two pore domain potassium channel (TC 1.A.1.8) family. In terms of assembly, homodimer; disulfide-linked. Forms heterodimers with other 2-pore domain K(+) channel subunits, such as KCNK1, KCNK4, KCNK10 and KCNK18. Interacts with AKAP5; the channel is recruited to postsynaptic microdomains by AKAP5 where it can integrate neurotransmitter receptor signals. Part of a complex composed of AKAP5 and ADRB2. Upon AKAP5 binding, the channel is no longer sensitive to intracellular acidification, membrane stretch or arachidonic acid stimuli. Interacts with POPDC1; the interaction enhances KCNK2 surface expression and is inhibited by cAMP. Interacts (via N-terminus) with G-protein subunit GNG4 (via C-terminus); this interaction confers ion selectivity to L-glutamate and Cl(-) anions. Post-translationally, phosphorylation at Ser-348 controls the reversible conversion from a leak channel to a voltage-dependent channel. In terms of tissue distribution, detected in kidney, adrenal gland and brain where it is preferentially expressed in the amygdala but not found in thalamus, hypothalamus, hippocampus or substantia nigra.

Its subcellular location is the cell membrane. It is found in the endoplasmic reticulum membrane. The protein localises to the cell projection. It localises to the axon. The protein resides in the dendrite. Its subcellular location is the postsynaptic density membrane. It is found in the sarcolemma. It carries out the reaction K(+)(in) = K(+)(out). The catalysed reaction is L-glutamate(out) = L-glutamate(in). The enzyme catalyses chloride(in) = chloride(out). It catalyses the reaction Rb(+)(in) = Rb(+)(out). It carries out the reaction Cs(+)(in) = Cs(+)(out). Its activity is regulated as follows. Activated by various stimuli including intracellular acidic pH, mechanical stretch and polyunsaturated fatty acids such as arachidonic acid. Activated by volatile anesthetics such as chloroform, halothane, and isoflurane. In terms of biological role, k(+) channel that conducts voltage-dependent outward rectifying currents upon membrane depolarization. Voltage sensing is coupled to K(+) electrochemical gradient in an 'ion flux gating' mode where outward but not inward ion flow opens the gate. Converts to voltage-independent 'leak' conductance mode upon stimulation by various stimuli including mechanical membrane stretch, acidic pH, heat and lipids. Reversibly converts between a voltage-insensitive K(+) 'leak' channel and a voltage-dependent outward rectifying K(+) channel in a phosphorylation-dependent manner. Homo- and heterodimerizes to form functional channels with distinct regulatory and gating properties. In trigeminal ganglia sensory neurons, the heterodimer of KCNK2/TREK-1 and KCNK18/TRESK inhibits neuronal firing and neurogenic inflammation by stabilizing the resting membrane potential at K(+) equilibrium potential as well as by regulating the threshold of action potentials and the spike frequency. At trigeminal A-beta afferent nerves, the heterodimer of KCNK2/TREK-1 and KCNK4/TRAAK is mostly coexpressed at nodes of Ranvier where it conducts voltage-independent mechanosensitive and thermosensitive currents, allowing rapid action potential repolarization, high speed and high frequence saltatory conduction on myelinated nerves to ensure prompt sensory responses. In hippocampal astrocytes, the heterodimer of KCNK2/TREK-1 and KCNK1/TWIK-1 allows passive K(+) conductance under basal conditions, but changes ion selectivity and becomes permeable to L-glutamate and Cl(-) ions upon binding to G-protein subunit GNG4 in stimulated astrocytes. Mediates rapid L-glutamate release in response to activation of G-protein-coupled receptors, such as F2R and CNR1. In hippocampal pyramidal neurons, the homodimer of KCNK2/TREK-1 contributes to gamma-aminobutyric acid (GABA) B-induced slow inhibitory postsynaptic potential. Associates with AKAP5 and Gs-protein-coupled receptor B2AR at postsynaptic dense bodies and converts to a leak channel no longer sensitive to stimulation by arachidonic acid, acidic pH or mechanical stress, nor inhibited by Gq-coupled receptors but still under the negative control of Gs-coupled receptors. Permeable to other monovalent cations such as Rb(+) and Cs(+). Its function is as follows. Does not display channel activity but reduces the channel activity of isoform 1 and isoform 2 and reduces cell surface expression of isoform 2. This is Potassium channel subfamily K member 2 from Homo sapiens (Human).